Reading from the N-terminus, the 1056-residue chain is MCDQGEVSSQNSSDYKEQRPTPRPNLPKIEESVLAFWSSDKTFEASLEQRQHGKRWVFYDGPPFANGLPHFGHLLTGYIKDAIPRYQTMRGQYVPRVFGWDTHGLPAELEAMKRLGITEKSQIESMGIASFNEAARKSVLTYVDQWEEYVNRQARWVDFKNGYKTLDLDYMESVLWAFKTLYKKGVIYEGYKVLPYCWNDQTPLSNHELRMDDEVYKQRLDDSLTVTFPLIGQKAKTCGLDGVAALAWTTTPWTLPSNMALIVSPNVEYVVVSSARQNSNSDFLLCKSSLDSYAECLGYESGQDARASIRRTLLGKEIEGIHYKPLFDYYADLHNAFTILSDNYVDVTEGTGIVHASPAHGEDDKRVCDAFGVPTVVSINDAACFTDVISNYAGMHIFDANAVIRSDLSRDGRILRHESYKHSYPHCWRCRSPLIYKAVTSWFFRITDSVNRMLELNQQINWVPKSVKNGQFAKWLSSAKDWSISRTRYWGTPIPVWKSDNPEYPRIDCYGSLKELEDDFGIKLTDLHRPEIDRLTRPNPDDPTGASTMRRVPDVLDVWFDAASMPFAQLHYPFENIERFEANKSADFIVEYAGQIRGWFYLLHAMSTALFDGVAFKNAICHGIVLGDDGQKASKSLRNYPDVYDVFENEGSDAVRWYLISSSILRGGSLIVSRKKIQDAIRQYITPLWSSWYFFHIYSEAARPGGYKARFSVDSQDILDRYILSKTGLLVEDVTRFMDSFDMASAALQLRDFVAVLTNWYIRRSRDRFWDGSDTGAFDTLYTVLETLCRLGAVFVPMVSEHVYKCLTNSRSVHLSDWPDVATFPNETGLVETMDRVRKICSTGLSLRKRLGIKARQPLSSAHIRVAQVGSLAQYKDIISGELNVKTVSIEEGSCTQRMLKILPRVAGPRLAGDVQTVIAAARRGDWTDHDGHVTAGGIPLLENEYQLVAGAQDSKNSQPLPFGGSVTLDTRIDETLRSEGVARDTVRQIQIARKEKDLNITDRISLEVCVPDEQVKNNLLAFSELICKETLCDRLDILVKKGIDGITVSLEKFRQ.

The segment covering 1–13 (MCDQGEVSSQNSS) has biased composition (polar residues). A disordered region spans residues 1-26 (MCDQGEVSSQNSSDYKEQRPTPRPNL). The 'HIGH' region signature appears at 63-73 (PFANGLPHFGH). The 'KMSKS' region motif lies at 632 to 636 (KASKS). K635 lines the ATP pocket.

Belongs to the class-I aminoacyl-tRNA synthetase family. IleS type 2 subfamily. Monomer. Requires Zn(2+) as cofactor.

It is found in the cytoplasm. It carries out the reaction tRNA(Ile) + L-isoleucine + ATP = L-isoleucyl-tRNA(Ile) + AMP + diphosphate. Functionally, catalyzes the attachment of isoleucine to tRNA(Ile). As IleRS can inadvertently accommodate and process structurally similar amino acids such as valine, to avoid such errors it has two additional distinct tRNA(Ile)-dependent editing activities. One activity is designated as 'pretransfer' editing and involves the hydrolysis of activated Val-AMP. The other activity is designated 'posttransfer' editing and involves deacylation of mischarged Val-tRNA(Ile). In Tropheryma whipplei (strain TW08/27) (Whipple's bacillus), this protein is Isoleucine--tRNA ligase.